The sequence spans 716 residues: ATP-dependent DNA helicase DinG (716 aa).

The region spanning 17–294 (ALQEQIPDFI…TCMEQFRPKT (278 aa)) is the Helicase ATP-binding domain. An ATP-binding site is contributed by 54-61 (APTGVGKT). Cys120 is a binding site for [4Fe-4S] cluster. Residues 131 to 134 (EPTQ) carry the DEAH box motif. The [4Fe-4S] cluster site is built by Cys194, Cys199, and Cys205. The short motif at 248–251 (DEGH) is the DEAH box element. Positions 517 to 698 (HIAEMAAFFR…VFPIEQPEVP (182 aa)) constitute a Helicase C-terminal domain.

Belongs to the helicase family. DinG subfamily. Type 1 sub-subfamily. [4Fe-4S] cluster serves as cofactor.

It carries out the reaction Couples ATP hydrolysis with the unwinding of duplex DNA at the replication fork by translocating in the 5'-3' direction. This creates two antiparallel DNA single strands (ssDNA). The leading ssDNA polymer is the template for DNA polymerase III holoenzyme which synthesizes a continuous strand.. It catalyses the reaction ATP + H2O = ADP + phosphate + H(+). Its function is as follows. DNA-dependent ATPase and 5'-3' DNA helicase. Unwinds D-loops, R-loops, forked DNA and G-quadruplex DNA. The polypeptide is ATP-dependent DNA helicase DinG (Escherichia coli O157:H7).